The following is a 317-amino-acid chain: Large ribosomal subunit protein uL10 (317 aa).

Tyr24 is modified (phosphotyrosine). A Phosphothreonine modification is found at Thr59. Lys264 participates in a covalent cross-link: Glycyl lysine isopeptide (Lys-Gly) (interchain with G-Cter in ubiquitin). Residues 294-317 form a disordered region; sequence APAKVEAKEESEESDEDMGFGLFD. Lys297 is covalently cross-linked (Glycyl lysine isopeptide (Lys-Gly) (interchain with G-Cter in SUMO1); alternate). Lys297 participates in a covalent cross-link: Glycyl lysine isopeptide (Lys-Gly) (interchain with G-Cter in SUMO2); alternate. Acidic residues predominate over residues 302 to 311; that stretch reads EESEESDEDM. Phosphoserine occurs at positions 304 and 307.

It belongs to the universal ribosomal protein uL10 family. In terms of assembly, P0 forms a pentameric complex by interaction with dimers of P1 and P2. Identified in a IGF2BP1-dependent mRNP granule complex containing untranslated mRNAs. Interacts with APEX1. Interacts with FMR1 isoform 6. Post-translationally, ubiquitinated at Lys-264 by RNF14 and RNF25 in response to ribosome collisions (ribosome stalling).

The protein localises to the nucleus. It is found in the cytoplasm. In terms of biological role, ribosomal protein P0 is the functional equivalent of E.coli protein L10. In Homo sapiens (Human), this protein is Large ribosomal subunit protein uL10 (RPLP0).